The sequence spans 415 residues: Serine/threonine transporter SstT (415 aa).

8 consecutive transmembrane segments (helical) span residues 15-35 (GSLV…AWLA), 45-65 (LGTL…WILV), 85-105 (ILYI…SFIF), 142-162 (ALLN…GIAL), 193-213 (VGIF…ALLG), 217-237 (LLVV…PLIV), 301-321 (GAAV…GIPV), and 331-351 (VVSA…LLLI).

This sequence belongs to the dicarboxylate/amino acid:cation symporter (DAACS) (TC 2.A.23) family.

The protein resides in the cell inner membrane. The enzyme catalyses L-serine(in) + Na(+)(in) = L-serine(out) + Na(+)(out). The catalysed reaction is L-threonine(in) + Na(+)(in) = L-threonine(out) + Na(+)(out). Functionally, involved in the import of serine and threonine into the cell, with the concomitant import of sodium (symport system). This chain is Serine/threonine transporter SstT, found in Photorhabdus laumondii subsp. laumondii (strain DSM 15139 / CIP 105565 / TT01) (Photorhabdus luminescens subsp. laumondii).